A 324-amino-acid polypeptide reads, in one-letter code: MPLKAELHCHIEGAAAPELVIRQAQKYGKDTAPYIQNGSFVWHDFTSFLAAYDFSAELFRTEEDYARLADHYLTSLARDGAIYSEVFTSPDHATKAGLSPKAYTDALGEGMLRAKAKTGIEGRMIVTGVRHVGVESIERAARFAARCGNPLVTGFGVAGDERVGEMEDYVRAFEIAREAGLGITIHAGELTGWETVQAALDHIRPSRIGHGVRAIENPDLVRRIADEGIVLECCPGSNIALKVFDSFADHPLPALQAAGCKVTLNSDDPPYFWTSLKREYDIAAEHFAMNEKALAAVTRTAIEAAFVDRKTKAALLARLNGAAR.

His-8, His-10, and His-186 together coordinate Zn(2+). Glu-189 acts as the Proton donor in catalysis. Asp-267 is a Zn(2+) binding site. Asp-268 contacts substrate.

It belongs to the metallo-dependent hydrolases superfamily. Adenosine and AMP deaminases family. Adenine deaminase type 2 subfamily. It depends on Zn(2+) as a cofactor.

It carries out the reaction adenine + H2O + H(+) = hypoxanthine + NH4(+). Its function is as follows. Catalyzes the hydrolytic deamination of adenine to hypoxanthine. Plays an important role in the purine salvage pathway and in nitrogen catabolism. This chain is Adenine deaminase, found in Mesorhizobium japonicum (strain LMG 29417 / CECT 9101 / MAFF 303099) (Mesorhizobium loti (strain MAFF 303099)).